Consider the following 334-residue polypeptide: MKETIAYLGMGMWGFSLANLLANNGHRVVGWARNPALIEQLSVQRRHPAAPHISIPQNLSFTYHMEEALDGATMIVEGVTSAGMRPVLTQLKALTELRVPLVITSKGIEQNTGLLLSEIALEIFGRPAAQHLGYLSGPSIASEVLRGCPCSVVISAYNPDTLKQIHRAFLTPTFRVYPNSDLKGVALGGALKNVIAIACGISDGFRFGDNAKSGLVTRGLHEIRKFATIMGCRPDTLNGLAGLGDLCTTCFSAFSRNTLFGKLLAEGLTPEQAKTKIGMVVEGVYTALSAHQIATHHRIDMPITTSVYRVLYENLDIQEGIAQLLQRDTKEEYL.

Residues tryptophan 13, arginine 33, and lysine 106 each contribute to the NADPH site. Sn-glycerol 3-phosphate is bound by residues lysine 106, glycine 137, and serine 139. Alanine 141 contributes to the NADPH binding site. The sn-glycerol 3-phosphate site is built by lysine 192, aspartate 245, serine 255, arginine 256, and asparagine 257. Lysine 192 acts as the Proton acceptor in catalysis. Arginine 256 lines the NADPH pocket. NADPH-binding residues include valine 280 and glutamate 282.

Belongs to the NAD-dependent glycerol-3-phosphate dehydrogenase family.

The protein localises to the cytoplasm. It catalyses the reaction sn-glycerol 3-phosphate + NAD(+) = dihydroxyacetone phosphate + NADH + H(+). It carries out the reaction sn-glycerol 3-phosphate + NADP(+) = dihydroxyacetone phosphate + NADPH + H(+). It functions in the pathway membrane lipid metabolism; glycerophospholipid metabolism. Functionally, catalyzes the reduction of the glycolytic intermediate dihydroxyacetone phosphate (DHAP) to sn-glycerol 3-phosphate (G3P), the key precursor for phospholipid synthesis. This is Glycerol-3-phosphate dehydrogenase [NAD(P)+] from Chlamydia trachomatis serovar L2 (strain ATCC VR-902B / DSM 19102 / 434/Bu).